Reading from the N-terminus, the 260-residue chain is Snake venom serine protease 2B (260 aa).

The signal sequence occupies residues Met-1 to Ala-18. A propeptide spanning residues Gln-19–Leu-24 is cleaved from the precursor. A Peptidase S1 domain is found at Val-25–Ala-251. Cystine bridges form between Cys-31–Cys-165, Cys-52–Cys-68, Cys-102–Cys-258, Cys-144–Cys-212, Cys-176–Cys-191, and Cys-202–Cys-227. His-67 acts as the Charge relay system in catalysis. 2 N-linked (GlcNAc...) asparagine glycosylation sites follow: Asn-101 and Asn-105. Residue Asp-112 is the Charge relay system of the active site. N-linked (GlcNAc...) asparagine glycosylation is found at Asn-123 and Asn-156. The active-site Charge relay system is Ser-206.

Belongs to the peptidase S1 family. Snake venom subfamily. In terms of assembly, monomer. As to expression, expressed by the venom gland.

Its subcellular location is the secreted. In terms of biological role, snake venom serine protease that may act in the hemostasis system of the prey. The polypeptide is Snake venom serine protease 2B (TLG2B) (Craspedocephalus gramineus (Bamboo pit viper)).